Reading from the N-terminus, the 330-residue chain is MQNFIEQIQKCENLNDLEAIRISVLGKKGILTEGFTKLKGLEDETKKEFAAKLNAQKEIFNKAYLAKFKDLENLALEERMKQDALNFNYFDESITTGALHPVMSTMDKIIEYFIALNFSIEKGPLIEDDFHNFEALNLPKSHPARDMQDTFYFDDKRLLRTQTSPVQIRTMLAQKPPIRMIAPGAVFRRDFDITHTPMFHQVEGLVVEEGQKVSFANLKSALEDFLRYMFGDVKVRFRPSFFPFTEPSAEVDISCVFCKEKGCRVCKHTGWLEVLGCGIVDPNVYNFVGYENVSGYAFGLGVERFAMLLHQIPDLRSLFEGDLRLLEQFR.

Glu-246 is a Mg(2+) binding site.

Belongs to the class-II aminoacyl-tRNA synthetase family. Phe-tRNA synthetase alpha subunit type 1 subfamily. Tetramer of two alpha and two beta subunits. Mg(2+) serves as cofactor.

The protein resides in the cytoplasm. The catalysed reaction is tRNA(Phe) + L-phenylalanine + ATP = L-phenylalanyl-tRNA(Phe) + AMP + diphosphate + H(+). The protein is Phenylalanine--tRNA ligase alpha subunit of Campylobacter jejuni subsp. doylei (strain ATCC BAA-1458 / RM4099 / 269.97).